The chain runs to 468 residues: Ammonium transporter Amt2 (468 aa).

12 helical membrane-spanning segments follow: residues 1-21 (MVGRMCVAVLIVLLLVATAGA), 39-59 (FVWALICGFLVMFMQAGFAML), 77-97 (LMDFAVGSLAFFAVGFALMMG), 123-143 (LWFFMLVFAATAATIVSGSIA), 156-176 (AVVSAVIYPIYGHWLWGGGWL), 194-214 (FAGSGVVHALGGYIALAAVML), 236-256 (LAFAVIGTFILWFGWFGFNAG), 268-288 (IIASNTNLAAAAGAVTAMAIT), 297-317 (VGMTCNGAVAGLVAITAPCAW), 321-341 (WSSVVIGTIAGFIATYGYWWL), 350-370 (VGAIPVHGFSGTWGLIALGIF), and 400-420 (LISAIVNFAWAFGTGFALFWI).

Belongs to the ammonia transporter channel (TC 1.A.11.2) family. In terms of assembly, homotrimer.

The protein localises to the cell membrane. Its function is as follows. Involved in the uptake of ammonium/ammonia (NH(4)(+)/NH(3)). Transport is electrogenic. In Archaeoglobus fulgidus (strain ATCC 49558 / DSM 4304 / JCM 9628 / NBRC 100126 / VC-16), this protein is Ammonium transporter Amt2.